Reading from the N-terminus, the 861-residue chain is Protein argonaute-4 (861 aa).

Residues Pro219–Ala338 enclose the PAZ domain. The region spanning Leu509–Val820 is the Piwi domain. Residues Asp825–Lys846 are disordered.

This sequence belongs to the argonaute family. Ago subfamily. As to quaternary structure, interacts with EIF4B, IMP8, PRMT5, TNRC6A and TNRC6B. Interacts with ZFP36. In terms of processing, ubiquitinated on surface-exposed lysines by a SCF-like E3 ubiquitin-protein ligase complex containing ZSWIM8 during target-directed microRNA degradation (TDMD), a process that mediates degradation of microRNAs (miRNAs). Ubiquitination by the SCF-like E3 ubiquitin-protein ligase complex containing ZSWIM8 leads to its subsequent degradation, thereby exposing miRNAs for degradation. ZSWIM8 recognizes and binds AGO4 when it is engaged with a TDMD target.

Its subcellular location is the cytoplasm. The protein resides in the P-body. Functionally, required for RNA-mediated gene silencing (RNAi). Binds to short RNAs such as microRNAs (miRNAs) and represses the translation of mRNAs which are complementary to them. Lacks endonuclease activity and does not appear to cleave target mRNAs. The sequence is that of Protein argonaute-4 (Ago4) from Mus musculus (Mouse).